We begin with the raw amino-acid sequence, 299 residues long: Coenzyme PQQ synthesis protein B (299 aa).

The protein belongs to the PqqB family.

The protein operates within cofactor biosynthesis; pyrroloquinoline quinone biosynthesis. May be involved in the transport of PQQ or its precursor to the periplasm. The polypeptide is Coenzyme PQQ synthesis protein B (Xanthomonas euvesicatoria pv. vesicatoria (strain 85-10) (Xanthomonas campestris pv. vesicatoria)).